Here is a 164-residue protein sequence, read N- to C-terminus: Translation initiation factor IF-3 (164 aa).

This sequence belongs to the IF-3 family. In terms of assembly, monomer.

Its subcellular location is the cytoplasm. IF-3 binds to the 30S ribosomal subunit and shifts the equilibrium between 70S ribosomes and their 50S and 30S subunits in favor of the free subunits, thus enhancing the availability of 30S subunits on which protein synthesis initiation begins. The protein is Translation initiation factor IF-3 of Bordetella bronchiseptica (strain ATCC BAA-588 / NCTC 13252 / RB50) (Alcaligenes bronchisepticus).